Consider the following 205-residue polypeptide: Small ribosomal subunit protein uS4 (205 aa).

The segment at I19–L45 is disordered. Positions S94–V157 constitute an S4 RNA-binding domain.

It belongs to the universal ribosomal protein uS4 family. Part of the 30S ribosomal subunit. Contacts protein S5. The interaction surface between S4 and S5 is involved in control of translational fidelity.

Its function is as follows. One of the primary rRNA binding proteins, it binds directly to 16S rRNA where it nucleates assembly of the body of the 30S subunit. In terms of biological role, with S5 and S12 plays an important role in translational accuracy. The chain is Small ribosomal subunit protein uS4 from Brucella melitensis biotype 2 (strain ATCC 23457).